The chain runs to 179 residues: Deoxyuridine 5'-triphosphate nucleotidohydrolase, mitochondrial (179 aa).

The N-terminal 41 residues, 1-41, are a transit peptide targeting the mitochondrion; that stretch reads MPIEQKYFSLFSNLFKRLTTNNNNNNYLKMAPPNFETFKVK. DUTP contacts are provided by residues 97–99, 111–114, Gly-122, Arg-165, and 170–171; these read RSG, GVID, and FG.

It belongs to the dUTPase family. As to quaternary structure, homotrimer. It depends on Mg(2+) as a cofactor.

The protein localises to the mitochondrion. It catalyses the reaction dUTP + H2O = dUMP + diphosphate + H(+). Its pathway is pyrimidine metabolism; dUMP biosynthesis; dUMP from dCTP (dUTP route): step 2/2. Its function is as follows. This enzyme is involved in nucleotide metabolism: it produces dUMP, the immediate precursor of thymidine nucleotides and it decreases the intracellular concentration of dUTP so that uracil cannot be incorporated into DNA. The sequence is that of Deoxyuridine 5'-triphosphate nucleotidohydrolase, mitochondrial (dut) from Dictyostelium discoideum (Social amoeba).